Reading from the N-terminus, the 63-residue chain is High-potential iron-sulfur protein (63 aa).

Residues C23, C26, C41, and C56 each contribute to the [4Fe-4S] cluster site.

It belongs to the high-potential iron-sulfur protein (HiPIP) family. Homodimer.

Its function is as follows. Specific class of high-redox-potential 4Fe-4S ferredoxins. Functions in anaerobic electron transport in most purple and in some other photosynthetic bacteria and in at least one genus (Paracoccus) of halophilic, denitrifying bacteria. This chain is High-potential iron-sulfur protein (hip), found in Rhodocyclus tenuis (Rhodospirillum tenue).